The sequence spans 43 residues: Potassium channel toxin gamma-KTx 4.9 (43 aa).

Intrachain disulfides connect Cys-5-Cys-23, Cys-11-Cys-34, Cys-20-Cys-39, and Cys-24-Cys-41.

The protein belongs to the ergtoxin family. Gamma-KTx 4 subfamily. Expressed by the venom gland.

Its subcellular location is the secreted. In terms of biological role, reversibly blocks Kv11/ERG potassium channels. The protein is Potassium channel toxin gamma-KTx 4.9 of Centruroides sculpturatus (Arizona bark scorpion).